The sequence spans 523 residues: La-related protein 1C (523 aa).

Over residues 1-16 the composition is skewed to low complexity; the sequence is MASATSNNPASSSMSP. Disordered regions lie at residues 1 to 52 and 95 to 313; these read MASA…VRGE and AAGD…VRHP. Ala-2 is modified (N-acetylalanine). Positions 22–31 are enriched in polar residues; it reads NHGSPTASVA. 2 stretches are compositionally biased toward low complexity: residues 32–44 and 146–169; these read QSPR…VSSP and SNKS…ASSS. Ser-33 is modified (phosphoserine). 2 stretches are compositionally biased toward polar residues: residues 206–270 and 282–305; these read QRNG…NGNH and HGNQ…SQRG. One can recognise an HTH La-type RNA-binding domain in the interval 363–452; that stretch reads HYQDPPLHMK…RDNWQNWVLR (90 aa). Residues 474–523 form a disordered region; the sequence is GNLSVDQSSADPIGGSSSQLQPTEALSDDQQQSSSTAPVSNHNAPDGANR. The span at 477-516 shows a compositional bias: polar residues; it reads SVDQSSADPIGGSSSQLQPTEALSDDQQQSSSTAPVSNHN.

Belongs to the LARP family. Age-dependent accumulation in rosette leaves.

It localises to the cytoplasm. In terms of biological role, promotes leaf senescence mediated by abscisic acid (ABA), salicylic acid (SA) and jasmonic acid (MeJA), probably though the induction of expression of senescence-associated genes (SAGs) and defense-related genes. The chain is La-related protein 1C (LARP1C) from Arabidopsis thaliana (Mouse-ear cress).